The sequence spans 232 residues: Flagellar L-ring protein (232 aa).

Residues 1–21 (MQKNAAHTYAISSLLVLSLTG) form the signal peptide. C22 carries the N-palmitoyl cysteine lipid modification. The S-diacylglycerol cysteine moiety is linked to residue C22.

It belongs to the FlgH family. The basal body constitutes a major portion of the flagellar organelle and consists of four rings (L,P,S, and M) mounted on a central rod.

It is found in the cell outer membrane. It localises to the bacterial flagellum basal body. Assembles around the rod to form the L-ring and probably protects the motor/basal body from shearing forces during rotation. In Shigella dysenteriae serotype 1 (strain Sd197), this protein is Flagellar L-ring protein.